The primary structure comprises 352 residues: B1 bradykinin receptor (352 aa).

At 1–41 the chain is on the extracellular side; sequence MASWPPLELQSSNQSQLFPQNATACDNAPEAWDLLHRVLPT. N-linked (GlcNAc...) asparagine glycans are attached at residues asparagine 13 and asparagine 21. A helical transmembrane segment spans residues 42 to 62; that stretch reads FIISICSFGLLGNLFVLLVFL. Topologically, residues 63–72 are cytoplasmic; sequence LPRRRLNVAE. A helical transmembrane segment spans residues 73–93; it reads IYLANLAASDLVFVLGLPFWA. The Extracellular segment spans residues 94–110; that stretch reads ENIWNQFNWPFGALLCR. Residues cysteine 109 and cysteine 188 are joined by a disulfide bond. Residues 111-131 traverse the membrane as a helical segment; it reads GINGVIKANLFISIFLVVAIS. At 132 to 153 the chain is on the cytoplasmic side; that stretch reads QDRYCLLVHPMASRRRQRRRQA. A helical transmembrane segment spans residues 154-174; it reads RVTCVLIWVVGGLLSIPTFLL. Residues 175 to 206 lie on the Extracellular side of the membrane; that stretch reads RSIQAVPDLNITACILLLPHEAWHFARIVELN. Asparagine 184 carries an N-linked (GlcNAc...) asparagine glycan. Residues 207–227 traverse the membrane as a helical segment; sequence ILAFLLPLAAIVFFNYHILAS. Over 228–250 the chain is Cytoplasmic; that stretch reads LRGREEVSRTRCGGRKDSKTTAL. Residues 251–271 form a helical membrane-spanning segment; sequence ILTLVVAFLVCWAPYHFFAFL. The Extracellular segment spans residues 272-294; sequence EFLFQVQAIRSCFWEDFIDLGLQ. A helical membrane pass occupies residues 295–315; it reads LANFLAFTNSSLNPVIYVFVG. The Cytoplasmic segment spans residues 316–352; it reads RLFRTKVWELYKQCTPKSLAPISSSHRKEIFQLFWRN. Residue cysteine 329 is the site of S-palmitoyl cysteine attachment.

This sequence belongs to the G-protein coupled receptor 1 family. Bradykinin receptor subfamily. BDKRB1 sub-subfamily.

The protein localises to the cell membrane. In terms of biological role, this is a receptor for bradykinin. Could be a factor in chronic pain and inflammation. This Chlorocebus pygerythrus (Vervet monkey) protein is B1 bradykinin receptor (BDKRB1).